A 155-amino-acid chain; its full sequence is Aspartate carbamoyltransferase regulatory chain (155 aa).

Zn(2+) is bound by residues C113, C118, C141, and C144.

It belongs to the PyrI family. Contains catalytic and regulatory chains. The cofactor is Zn(2+).

Its function is as follows. Involved in allosteric regulation of aspartate carbamoyltransferase. The chain is Aspartate carbamoyltransferase regulatory chain from Methanococcus aeolicus (strain ATCC BAA-1280 / DSM 17508 / OCM 812 / Nankai-3).